Here is a 329-residue protein sequence, read N- to C-terminus: Alpha/beta hydrolase domain-containing protein 17C (329 aa).

The segment covering glycine 53 to glycine 79 has biased composition (low complexity). A disordered region spans residues glycine 53–glycine 85. Active-site charge relay system residues include serine 211, aspartate 276, and histidine 305.

The protein belongs to the AB hydrolase superfamily. ABHD17 family. Palmitoylated on cysteine residues located in a cysteine cluster at the N-terminus which promotes membrane localization. Palmitoylation is required for post-synaptic localization and for depalmitoylating activity towards DLG4/PSD95.

It is found in the recycling endosome membrane. Its subcellular location is the cell projection. The protein resides in the dendritic spine. It localises to the postsynaptic density membrane. It catalyses the reaction S-hexadecanoyl-L-cysteinyl-[protein] + H2O = L-cysteinyl-[protein] + hexadecanoate + H(+). Inhibited by palmostatin-B. Hydrolyzes fatty acids from S-acylated cysteine residues in proteins. Has depalmitoylating activity towards NRAS and DLG4/PSD95. The polypeptide is Alpha/beta hydrolase domain-containing protein 17C (Homo sapiens (Human)).